Consider the following 840-residue polypeptide: Phosphatidylglycerol lysyltransferase (840 aa).

Residues 1–8 lie on the Cytoplasmic side of the membrane; the sequence is MNQEVKNK. Residues 9–29 form a helical membrane-spanning segment; the sequence is IFSILKITFATALFIFVAITL. Over 30 to 52 the chain is Extracellular; it reads YRELSGINFKDTLVEFSKINRMS. The chain crosses the membrane as a helical span at residues 53–73; sequence LVLLFIGGGASLVILSMYDVI. Topologically, residues 74-89 are cytoplasmic; that stretch reads LSRALKMDISLGKVLR. Residues 90 to 110 form a helical membrane-spanning segment; it reads VSYIINALNAIVGFGGFIGAG. The Extracellular segment spans residues 111-128; sequence VRAMVYKNYTHDKKKLVH. A helical membrane pass occupies residues 129-149; it reads FISLILISMLTGLSLLSLLIV. Topologically, residues 150–161 are cytoplasmic; the sequence is FHVFDASLILDK. The chain crosses the membrane as a helical span at residues 162–182; that stretch reads ITWVRWVLYVVSFFLPLFIIY. The Extracellular portion of the chain corresponds to 183 to 200; it reads SMVRPPDKNNRFVGLYCT. A helical membrane pass occupies residues 201-221; that stretch reads LVSCVEWLAAAVVLYFCGVIV. Over 222-229 the chain is Cytoplasmic; the sequence is DAHVSFMS. The chain crosses the membrane as a helical span at residues 230–250; it reads FIAIFIIAALSGLVSFIPGGF. The Extracellular portion of the chain corresponds to 251 to 271; it reads GAFDLVVLLGFKTLGVPEEKV. A helical transmembrane segment spans residues 272 to 292; the sequence is LLMLLLYRFAYYFVPVIIALI. Residues 293–337 are Cytoplasmic-facing; the sequence is LSSFEFGTSAKKYIEGSKYFIPAKDVTSFLMSYQKDIIAKIPSLS. A helical membrane pass occupies residues 338-358; the sequence is LAILVFFTSMIFFVNNLTIVY. Over 359–369 the chain is Extracellular; the sequence is DALYDGNHLTY. Residues 370-390 traverse the membrane as a helical segment; it reads YILLAIHTSACLLLLLNVVGI. Residues 391 to 394 are Cytoplasmic-facing; that stretch reads YKQS. Transmembrane regions (helical) follow at residues 395–415 and 416–436; these read RRAIIFAMISILLITVATFFT and YASYILITWLAIIFVLLIVAF. Residues 437–450 lie on the Cytoplasmic side of the membrane; that stretch reads RRARRLKRPVRMRN. A helical membrane pass occupies residues 451–471; the sequence is IVAMLLFSLFILYVNHIFIAG. The Extracellular segment spans residues 472–489; it reads TLYALDIYTIEMHTSVLR. Residues 490 to 510 form a helical membrane-spanning segment; sequence YYFWLTILIIAIIIGMIAWLF. The Cytoplasmic portion of the chain corresponds to 511 to 840; sequence DYQFSKVRIS…SKVMRVIRHK (330 aa).

It belongs to the LPG synthase family.

The protein localises to the cell membrane. It catalyses the reaction L-lysyl-tRNA(Lys) + a 1,2-diacyl-sn-glycero-3-phospho-(1'-sn-glycerol) = a 1,2-diacyl-sn-glycero-3-phospho-1'-(3'-O-L-lysyl)-sn-glycerol + tRNA(Lys). Catalyzes the transfer of a lysyl group from L-lysyl-tRNA(Lys) to membrane-bound phosphatidylglycerol (PG), which produces lysylphosphatidylglycerol (LPG), a major component of the bacterial membrane with a positive net charge. LPG synthesis contributes to bacterial virulence as it is involved in the resistance mechanism against cationic antimicrobial peptides (CAMP) produces by the host's immune system (defensins, cathelicidins) and by the competing microorganisms (bacteriocins). In fact, the modification of anionic phosphatidylglycerol with positively charged L-lysine results in repulsion of the peptides. This is Phosphatidylglycerol lysyltransferase (mprF) from Staphylococcus aureus (strain Mu50 / ATCC 700699).